Here is a 122-residue protein sequence, read N- to C-terminus: Large ribosomal subunit protein uL18 (122 aa).

The protein belongs to the universal ribosomal protein uL18 family. Part of the 50S ribosomal subunit; part of the 5S rRNA/L5/L18/L25 subcomplex. Contacts the 5S and 23S rRNAs.

In terms of biological role, this is one of the proteins that bind and probably mediate the attachment of the 5S RNA into the large ribosomal subunit, where it forms part of the central protuberance. The sequence is that of Large ribosomal subunit protein uL18 from Synechococcus sp. (strain JA-2-3B'a(2-13)) (Cyanobacteria bacterium Yellowstone B-Prime).